A 359-amino-acid chain; its full sequence is 3-dehydroquinate synthase (359 aa).

NAD(+) is bound by residues 106-110, 130-131, lysine 143, and lysine 152; these read GVVGD and TS. 3 residues coordinate Zn(2+): glutamate 185, histidine 246, and histidine 262.

This sequence belongs to the sugar phosphate cyclases superfamily. Dehydroquinate synthase family. NAD(+) serves as cofactor. Co(2+) is required as a cofactor. Requires Zn(2+) as cofactor.

The protein localises to the cytoplasm. The catalysed reaction is 7-phospho-2-dehydro-3-deoxy-D-arabino-heptonate = 3-dehydroquinate + phosphate. It participates in metabolic intermediate biosynthesis; chorismate biosynthesis; chorismate from D-erythrose 4-phosphate and phosphoenolpyruvate: step 2/7. Its function is as follows. Catalyzes the conversion of 3-deoxy-D-arabino-heptulosonate 7-phosphate (DAHP) to dehydroquinate (DHQ). The chain is 3-dehydroquinate synthase from Lactiplantibacillus plantarum (strain ATCC BAA-793 / NCIMB 8826 / WCFS1) (Lactobacillus plantarum).